The primary structure comprises 505 residues: Glutamate--tRNA ligase (505 aa).

The short motif at 12–22 (PSPTGDPHVGT) is the 'HIGH' region element. A 'KMSKS' region motif is present at residues 253 to 257 (KLSKR). ATP is bound at residue Lys256.

The protein belongs to the class-I aminoacyl-tRNA synthetase family. Glutamate--tRNA ligase type 1 subfamily. Monomer.

It localises to the cytoplasm. It catalyses the reaction tRNA(Glu) + L-glutamate + ATP = L-glutamyl-tRNA(Glu) + AMP + diphosphate. In terms of biological role, catalyzes the attachment of glutamate to tRNA(Glu) in a two-step reaction: glutamate is first activated by ATP to form Glu-AMP and then transferred to the acceptor end of tRNA(Glu). This chain is Glutamate--tRNA ligase, found in Chlamydia caviae (strain ATCC VR-813 / DSM 19441 / 03DC25 / GPIC) (Chlamydophila caviae).